The following is a 904-amino-acid chain: Protein translocase subunit SecA (904 aa).

ATP is bound by residues Gln-87, 105-109, and Asp-512; that span reads GEGKT. A disordered region spans residues 851–904; the sequence is LAKQQQLSHESDNSALMSQEEANVAASLERKVGRNDPCPCGSGKKYKQCHGRLQ. Residues 853–871 show a composition bias toward polar residues; the sequence is KQQQLSHESDNSALMSQEE. Residues Cys-888, Cys-890, Cys-899, and His-900 each coordinate Zn(2+). Residues 894-904 show a composition bias toward basic residues; sequence KKYKQCHGRLQ.

The protein belongs to the SecA family. As to quaternary structure, monomer and homodimer. Part of the essential Sec protein translocation apparatus which comprises SecA, SecYEG and auxiliary proteins SecDF-YajC and YidC. Zn(2+) is required as a cofactor.

The protein resides in the cell inner membrane. It localises to the cytoplasm. It carries out the reaction ATP + H2O + cellular proteinSide 1 = ADP + phosphate + cellular proteinSide 2.. Its function is as follows. Part of the Sec protein translocase complex. Interacts with the SecYEG preprotein conducting channel. Has a central role in coupling the hydrolysis of ATP to the transfer of proteins into and across the cell membrane, serving both as a receptor for the preprotein-SecB complex and as an ATP-driven molecular motor driving the stepwise translocation of polypeptide chains across the membrane. This chain is Protein translocase subunit SecA, found in Yersinia enterocolitica serotype O:8 / biotype 1B (strain NCTC 13174 / 8081).